A 408-amino-acid polypeptide reads, in one-letter code: Putative odorant receptor 92a (408 aa).

Over 1-52 (MLFRKRKPKSDDEVITFDELTRFPMTFYKTIGEDLYSDRDPNVIRRYLLRFY) the chain is Cytoplasmic. Residues 53–73 (LVLGFLNFNAYVVGEIAYFIV) form a helical membrane-spanning segment. H74 is a topological domain (extracellular). A helical membrane pass occupies residues 75–95 (IMSTTTLLEATAVAPCIGFSF). Residues 96–144 (MADFKQFGLTVNRKRLVRLLDDLKEIFPLDLEAQRKYNVSFYRKHMNRV) are Cytoplasmic-facing. Residues 145 to 165 (MTLFTILCMTYTSSFSFYPAI) form a helical membrane-spanning segment. Residues 166-209 (KSTIKYYLMGSEIFERNYGFHILFPYDAETDLTVYWFSYWGLAH) lie on the Extracellular side of the membrane. The chain crosses the membrane as a helical span at residues 210–230 (CAYVAGVSYVCVDLLLIATIT). The Cytoplasmic segment spans residues 231–276 (QLTMHFNFIANDLEAYEGGDHTDEENIKYLHNLVVYHARALDLSEE). Residues 277 to 301 (VNNIFSFLILWNFIAASLVICFAGF) traverse the membrane as a helical segment. Residues 302-310 (QITASNVED) lie on the Extracellular side of the membrane. The helical transmembrane segment at 311–331 (IVLYFIFFSASLVQVFVVCYY) threads the bilayer. Residues 332 to 378 (GDEMISSSSRIGHSAFNQNWLPCSTKYKRILQFIIARSQKPASIRPP) lie on the Cytoplasmic side of the membrane. A helical transmembrane segment spans residues 379–399 (TFPPISFNTFMKVISMSYQFF). Topologically, residues 400–408 (ALLRTTYYG) are extracellular.

The protein belongs to the insect chemoreceptor superfamily. Heteromeric odorant receptor channel (TC 1.A.69) family. Or49a subfamily. In terms of assembly, interacts with Orco. Complexes exist early in the endomembrane system in olfactory sensory neurons (OSNs), coupling these complexes to the conserved ciliary trafficking pathway.

Its subcellular location is the cell membrane. Functionally, odorant receptor which mediates acceptance or avoidance behavior, depending on its substrates. The odorant receptor repertoire encodes a large collection of odor stimuli that vary widely in identity, intensity, and duration. May form a complex with Orco to form odorant-sensing units, providing sensitive and prolonged odorant signaling and calcium permeability. This chain is Putative odorant receptor 92a (Or92a), found in Drosophila melanogaster (Fruit fly).